The following is a 611-amino-acid chain: Menin (611 aa).

The segment at 214 to 390 (GVAERSWLYL…SLLETGEERT (177 aa)) is interaction with FANCD2. The disordered stretch occupies residues 460 to 553 (REAEAAEAEE…SPPPEGPVLT (94 aa)). The segment covering 484–500 (RRESKPEEPPPPKKPAL) has biased composition (basic and acidic residues). Residues S487 and S544 each carry the phosphoserine modification. A Phosphothreonine modification is found at T595.

Component of the MLL-HCF complex, at least composed of KMT2A/MLL1, MEN1, ASH2L, RBBP5, DPY30, WDR5, HCFC1 and HCFC2. Component of the menin-associated histone methyltransferase complex, at least composed of KMT2B/MLL4, MEN1, ASH2L, RBBP5, DPY30 and WDR5. Interacts with POLR2B. Interacts with POLR2A phosphorylated at 'Ser-5', but not with the unphosphorylated, nor 'Ser-2' phosphorylated POLR2A forms. Interacts with FANCD2 and DBF4. Interacts with SMAD3, but not with SMAD2, nor SMAD4. Directly interacts with NFKB1, NFKB2 and RELA. Interacts with JUND (via MBM motif); inhibits the interaction of JUND with MAPK10 and the phosphorylation of JUND by MAP kinases MAPK8 and MAPK10. Interacts with KMT2A (via MBM motif). The KMT2A-MEN1 complex interacts with PSIP1 with a greater affinity as MEN1 enhances interaction of KMT2A with PSIP1. In terms of tissue distribution, widely expressed, with high levels in hippocampus, cerebral cortex, testis and thymus (at protein level). Also expressed at high levels in pancreatic islets, ovary and bone marrow. In the brain, highest expression in hippocampus pyramidal nerve cells (at protein level). In the testis, may be expressed in spermatogonia (at protein level). Low expression, if any, in skeletal muscle.

It is found in the nucleus. Its function is as follows. Essential component of a MLL/SET1 histone methyltransferase (HMT) complex, a complex that specifically methylates 'Lys-4' of histone H3 (H3K4). Functions as a transcriptional regulator. Binds to the TERT promoter and represses telomerase expression. Plays a role in TGFB1-mediated inhibition of cell-proliferation, possibly regulating SMAD3 transcriptional activity. Represses JUND-mediated transcriptional activation on AP1 sites, as well as that mediated by NFKB subunit RELA. Positively regulates HOXC8 and HOXC6 gene expression. May be involved in normal hematopoiesis through the activation of HOXA9 expression. May be involved in DNA repair. The protein is Menin (Men1) of Mus musculus (Mouse).